The primary structure comprises 190 residues: Potassium-transporting ATPase KdpC subunit (190 aa).

Residues 10-30 traverse the membrane as a helical segment; it reads VLLLVLTGLTGFAYPLLSTAI.

It belongs to the KdpC family. The system is composed of three essential subunits: KdpA, KdpB and KdpC.

It localises to the cell inner membrane. Functionally, part of the high-affinity ATP-driven potassium transport (or Kdp) system, which catalyzes the hydrolysis of ATP coupled with the electrogenic transport of potassium into the cytoplasm. This subunit acts as a catalytic chaperone that increases the ATP-binding affinity of the ATP-hydrolyzing subunit KdpB by the formation of a transient KdpB/KdpC/ATP ternary complex. This chain is Potassium-transporting ATPase KdpC subunit, found in Sorangium cellulosum (strain So ce56) (Polyangium cellulosum (strain So ce56)).